Consider the following 294-residue polypeptide: ATP phosphoribosyltransferase (294 aa).

It belongs to the ATP phosphoribosyltransferase family. Long subfamily. Mg(2+) is required as a cofactor.

The protein resides in the cytoplasm. It catalyses the reaction 1-(5-phospho-beta-D-ribosyl)-ATP + diphosphate = 5-phospho-alpha-D-ribose 1-diphosphate + ATP. It participates in amino-acid biosynthesis; L-histidine biosynthesis; L-histidine from 5-phospho-alpha-D-ribose 1-diphosphate: step 1/9. With respect to regulation, feedback inhibited by histidine. Its function is as follows. Catalyzes the condensation of ATP and 5-phosphoribose 1-diphosphate to form N'-(5'-phosphoribosyl)-ATP (PR-ATP). Has a crucial role in the pathway because the rate of histidine biosynthesis seems to be controlled primarily by regulation of HisG enzymatic activity. In Prosthecochloris aestuarii (strain DSM 271 / SK 413), this protein is ATP phosphoribosyltransferase.